We begin with the raw amino-acid sequence, 441 residues long: Ribosomal protein uS12 methylthiotransferase RimO (441 aa).

In terms of domain architecture, MTTase N-terminal spans 6–116; that stretch reads QKVGIVSLGC…VVAAVHEAAP (111 aa). Cysteine 15, cysteine 51, cysteine 80, cysteine 147, cysteine 151, and cysteine 154 together coordinate [4Fe-4S] cluster. Positions 133–370 constitute a Radical SAM core domain; the sequence is LTPRHYAYLK…MAAQQEISER (238 aa). In terms of domain architecture, TRAM spans 373 to 439; sequence AQKVGTVIEA…EYDLWGSLAG (67 aa).

Belongs to the methylthiotransferase family. RimO subfamily. [4Fe-4S] cluster is required as a cofactor.

The protein localises to the cytoplasm. The catalysed reaction is L-aspartate(89)-[ribosomal protein uS12]-hydrogen + (sulfur carrier)-SH + AH2 + 2 S-adenosyl-L-methionine = 3-methylsulfanyl-L-aspartate(89)-[ribosomal protein uS12]-hydrogen + (sulfur carrier)-H + 5'-deoxyadenosine + L-methionine + A + S-adenosyl-L-homocysteine + 2 H(+). Functionally, catalyzes the methylthiolation of an aspartic acid residue of ribosomal protein uS12. This is Ribosomal protein uS12 methylthiotransferase RimO from Rhodospirillum rubrum (strain ATCC 11170 / ATH 1.1.1 / DSM 467 / LMG 4362 / NCIMB 8255 / S1).